Reading from the N-terminus, the 327-residue chain is Probable cell division protein WhiA (327 aa).

The H-T-H motif DNA-binding region spans 275 to 308; that stretch reads SLEELGQLADPPMTKDAVAGRIRRLLSMADRKAK. Residues 306–327 form a disordered region; it reads KAKETGIPDTESAVTADLLDDA.

Belongs to the WhiA family.

Involved in cell division and chromosome segregation. The chain is Probable cell division protein WhiA from Rhodococcus jostii (strain RHA1).